We begin with the raw amino-acid sequence, 108 residues long: Transmembrane protein 141 (108 aa).

Transmembrane regions (helical) follow at residues 32–52 and 58–78; these read MKGV…QMFI and YPLQ…SYGV.

This sequence belongs to the TMEM141 family.

It localises to the membrane. The sequence is that of Transmembrane protein 141 (TMEM141) from Homo sapiens (Human).